The chain runs to 242 residues: tRNA pseudouridine synthase A (242 aa).

D51 (nucleophile) is an active-site residue. Y107 lines the substrate pocket.

The protein belongs to the tRNA pseudouridine synthase TruA family. In terms of assembly, homodimer.

It carries out the reaction uridine(38/39/40) in tRNA = pseudouridine(38/39/40) in tRNA. Its function is as follows. Formation of pseudouridine at positions 38, 39 and 40 in the anticodon stem and loop of transfer RNAs. The chain is tRNA pseudouridine synthase A from Helicobacter pylori (strain HPAG1).